Here is a 260-residue protein sequence, read N- to C-terminus: 5-oxoprolinase subunit A 2 (260 aa).

The protein belongs to the LamB/PxpA family. Forms a complex composed of PxpA, PxpB and PxpC.

It carries out the reaction 5-oxo-L-proline + ATP + 2 H2O = L-glutamate + ADP + phosphate + H(+). Catalyzes the cleavage of 5-oxoproline to form L-glutamate coupled to the hydrolysis of ATP to ADP and inorganic phosphate. The polypeptide is 5-oxoprolinase subunit A 2 (Ralstonia nicotianae (strain ATCC BAA-1114 / GMI1000) (Ralstonia solanacearum)).